The primary structure comprises 369 residues: Histidinol-phosphate aminotransferase 2 (369 aa).

K227 is subject to N6-(pyridoxal phosphate)lysine.

It belongs to the class-II pyridoxal-phosphate-dependent aminotransferase family. Histidinol-phosphate aminotransferase subfamily. As to quaternary structure, homodimer. It depends on pyridoxal 5'-phosphate as a cofactor.

The enzyme catalyses L-histidinol phosphate + 2-oxoglutarate = 3-(imidazol-4-yl)-2-oxopropyl phosphate + L-glutamate. It functions in the pathway amino-acid biosynthesis; L-histidine biosynthesis; L-histidine from 5-phospho-alpha-D-ribose 1-diphosphate: step 7/9. The sequence is that of Histidinol-phosphate aminotransferase 2 (hisC2) from Mesorhizobium japonicum (strain LMG 29417 / CECT 9101 / MAFF 303099) (Mesorhizobium loti (strain MAFF 303099)).